The sequence spans 70 residues: U2-agatoxin-Ao1d (70 aa).

An N-terminal signal peptide occupies residues 1–20 (MRAIIYLLLISAMVFSMTKA). A propeptide spanning residues 21 to 34 (VPEEEGLQLSEDER) is cleaved from the precursor. 3 disulfide bridges follow: Cys37/Cys53, Cys44/Cys58, and Cys52/Cys68. Leu69 carries the leucine amide modification.

This sequence belongs to the neurotoxin 01 (U2-agtx) family. As to expression, expressed by the venom gland.

The protein resides in the secreted. Its function is as follows. Insect active toxin causing rapid but reversible paralysis in crickets. No activity shown in mammals. Does not show effect on mammalian voltage-gated calcium channels. The chain is U2-agatoxin-Ao1d from Agelena orientalis (Funnel-web spider).